The following is a 444-amino-acid chain: Phosphoglucosamine mutase (444 aa).

The Phosphoserine intermediate role is filled by Ser-102. Residues Ser-102, Asp-241, Asp-243, and Asp-245 each coordinate Mg(2+). Ser-102 is modified (phosphoserine).

The protein belongs to the phosphohexose mutase family. Mg(2+) is required as a cofactor. Activated by phosphorylation.

It carries out the reaction alpha-D-glucosamine 1-phosphate = D-glucosamine 6-phosphate. Catalyzes the conversion of glucosamine-6-phosphate to glucosamine-1-phosphate. The chain is Phosphoglucosamine mutase from Mannheimia succiniciproducens (strain KCTC 0769BP / MBEL55E).